The sequence spans 499 residues: Glycerol kinase (499 aa).

Threonine 13 lines the ADP pocket. Positions 13, 14, and 15 each coordinate ATP. Threonine 13 serves as a coordination point for sn-glycerol 3-phosphate. Arginine 17 contacts ADP. The sn-glycerol 3-phosphate site is built by arginine 83, glutamate 84, tyrosine 135, and aspartate 244. Positions 83, 84, 135, 244, and 245 each coordinate glycerol. 2 residues coordinate ADP: threonine 266 and glycine 309. Residues threonine 266, glycine 309, glutamine 313, and glycine 410 each contribute to the ATP site. ADP-binding residues include glycine 410 and asparagine 414.

It belongs to the FGGY kinase family.

It carries out the reaction glycerol + ATP = sn-glycerol 3-phosphate + ADP + H(+). It participates in polyol metabolism; glycerol degradation via glycerol kinase pathway; sn-glycerol 3-phosphate from glycerol: step 1/1. Its activity is regulated as follows. Inhibited by fructose 1,6-bisphosphate (FBP). Key enzyme in the regulation of glycerol uptake and metabolism. Catalyzes the phosphorylation of glycerol to yield sn-glycerol 3-phosphate. In Paraburkholderia xenovorans (strain LB400), this protein is Glycerol kinase.